We begin with the raw amino-acid sequence, 172 residues long: Adenine phosphoribosyltransferase (172 aa).

It belongs to the purine/pyrimidine phosphoribosyltransferase family. Homodimer.

The protein localises to the cytoplasm. The catalysed reaction is AMP + diphosphate = 5-phospho-alpha-D-ribose 1-diphosphate + adenine. It functions in the pathway purine metabolism; AMP biosynthesis via salvage pathway; AMP from adenine: step 1/1. Catalyzes a salvage reaction resulting in the formation of AMP, that is energically less costly than de novo synthesis. This Methanococcus maripaludis (strain C5 / ATCC BAA-1333) protein is Adenine phosphoribosyltransferase.